The primary structure comprises 334 residues: Glutamyl-tRNA reductase (334 aa).

Residues 49–52 (TCNR), serine 107, 112–114 (EDQ), and glutamine 118 each bind substrate. Cysteine 50 acts as the Nucleophile in catalysis. 186–191 (GNGEMG) contributes to the NADP(+) binding site.

This sequence belongs to the glutamyl-tRNA reductase family. Homodimer.

The enzyme catalyses (S)-4-amino-5-oxopentanoate + tRNA(Glu) + NADP(+) = L-glutamyl-tRNA(Glu) + NADPH + H(+). The protein operates within porphyrin-containing compound metabolism; protoporphyrin-IX biosynthesis; 5-aminolevulinate from L-glutamyl-tRNA(Glu): step 1/2. Catalyzes the NADPH-dependent reduction of glutamyl-tRNA(Glu) to glutamate 1-semialdehyde (GSA). In Alkaliphilus oremlandii (strain OhILAs) (Clostridium oremlandii (strain OhILAs)), this protein is Glutamyl-tRNA reductase.